The chain runs to 212 residues: MENTEKLKNSKEIVAYLVEKFPACFIAEGEAKPLKIGIFQDLAERLADDARVSKTMLRSALRQYTSSWRYLHGLKAGQARVDLDGNPGELLTEEHIEHAKQALKESKERVFASRRTNTKEEKAKQPRRPAPRKADAAAKSDKPKAAPKAAPVAVEAPLVKVDAATLKVDQGVRVVLGKSPVPATIKEVTKDDVQVQLQTGMMLRVKFEHLVL.

Basic and acidic residues-rich tracts occupy residues 102–124 (ALKE…EKAK) and 132–144 (RKAD…DKPK). Positions 102–149 (ALKESKERVFASRRTNTKEEKAKQPRRPAPRKADAAAKSDKPKAAPKA) are disordered.

It belongs to the ProQ family.

It is found in the cytoplasm. Functionally, RNA chaperone with significant RNA binding, RNA strand exchange and RNA duplexing activities. The sequence is that of RNA chaperone ProQ from Aeromonas hydrophila subsp. hydrophila (strain ATCC 7966 / DSM 30187 / BCRC 13018 / CCUG 14551 / JCM 1027 / KCTC 2358 / NCIMB 9240 / NCTC 8049).